The sequence spans 452 residues: Ribosomal protein uS12 methylthiotransferase RimO (452 aa).

The MTTase N-terminal domain occupies 8-123; sequence PRVGFVSLGC…VMQAVHTHLP (116 aa). C17, C53, C82, C154, C158, and C161 together coordinate [4Fe-4S] cluster. Residues 140–381 enclose the Radical SAM core domain; the sequence is LTPKHYAYLK…MEVAEEVSAR (242 aa). Residues 384–452 enclose the TRAM domain; sequence QRKVGQTLRV…ADGHDLWGEI (69 aa).

This sequence belongs to the methylthiotransferase family. RimO subfamily. [4Fe-4S] cluster serves as cofactor.

Its subcellular location is the cytoplasm. It catalyses the reaction L-aspartate(89)-[ribosomal protein uS12]-hydrogen + (sulfur carrier)-SH + AH2 + 2 S-adenosyl-L-methionine = 3-methylsulfanyl-L-aspartate(89)-[ribosomal protein uS12]-hydrogen + (sulfur carrier)-H + 5'-deoxyadenosine + L-methionine + A + S-adenosyl-L-homocysteine + 2 H(+). Catalyzes the methylthiolation of an aspartic acid residue of ribosomal protein uS12. The polypeptide is Ribosomal protein uS12 methylthiotransferase RimO (Cupriavidus pinatubonensis (strain JMP 134 / LMG 1197) (Cupriavidus necator (strain JMP 134))).